Reading from the N-terminus, the 292-residue chain is Protein PHR1-LIKE 3 (292 aa).

Residues 34–94 (TDPKPRLRWT…HLQKFRLGRQ (61 aa)) enclose the HTH myb-type domain. The H-T-H motif DNA-binding region spans 65–90 (PKTIMRTMGVKGLTLYHLKSHLQKFR). Positions 137-157 (TEALRAQMEVQRRLHEQLEVQ) form a coiled coil. Residues 150 to 155 (LHEQLE) carry the LHEQLE motif.

It belongs to the MYB-CC family. As to quaternary structure, homo- and heterodimers. Interacts with PHL2, but not with PHR1.

The protein localises to the nucleus. Transcriptional activator. Probable component of the central regulatory system controlling transcriptional responses to Pi starvation. Binds in a sequence-specific manner to phosphate starvation-regulated promoters. Required for female gametophyte development and function. This is Protein PHR1-LIKE 3 from Arabidopsis thaliana (Mouse-ear cress).